The primary structure comprises 156 residues: Myosin, essential light chain, adductor muscle (156 aa).

2 consecutive EF-hand domains span residues 6–43 (DEIDDLKDVFELFDFWDGRDGAVDAFKLGDVCRCLGIN) and 81–116 (GTFADYMEAFKTFDREGQGFISGAELRHVLTALGER).

In terms of biological role, in molluscan muscle, calcium regulation is associated with myosin rather than with actin. Muscle myosin contains two types of light chains: the catalytic light chain, essential for ATPase activity, and the regulatory light chain, a calcium-binding protein responsible for Ca(2+) dependent binding and Ca(2+) dependent Mg-ATPase activity. The sequence is that of Myosin, essential light chain, adductor muscle from Mizuhopecten yessoensis (Japanese scallop).